A 132-amino-acid polypeptide reads, in one-letter code: UPF0102 protein Ajs_0414 (132 aa).

The disordered stretch occupies residues 1 to 23 (MGFLGKKVNGSAPARTTRAAGQA).

This sequence belongs to the UPF0102 family.

This chain is UPF0102 protein Ajs_0414, found in Acidovorax sp. (strain JS42).